The primary structure comprises 606 residues: Flagellar WD repeat-containing protein Pf20 (606 aa).

Residues 229–250 (PLPGAERSLGGQSTAAAGGGAS) are disordered. 7 WD repeats span residues 324 to 354 (GHLLSVANLALHPTKPILVTASDDKTWKMWH), 366 to 396 (GHKDWVAGVDFHPAGTCLASGGGDSAVKIWD), 408 to 438 (DHKQAIWSVRFHHLGEVVASGSLDHTVRLWD), 450 to 480 (GHVDSVNDLAWQPFSSSLATASSDKTVSVWD), 492 to 522 (GHQNSCNGVSFNILGTQLASTDADGVVKLWD), 534 to 564 (TGKHPANKSCFDRSGQVLAVACDDGKVKAYS), and 576 to 606 (GHEDAVQAVLFDPAGQYLVSCGSDNTFRLWS).

Inter-microtubule bridges in flagella.

The protein localises to the cell projection. Its subcellular location is the cilium. It localises to the flagellum. This Chlamydomonas reinhardtii (Chlamydomonas smithii) protein is Flagellar WD repeat-containing protein Pf20 (PF20).